The primary structure comprises 491 residues: Glutamyl-tRNA(Gln) amidotransferase subunit A (491 aa).

Active-site charge relay system residues include Lys76 and Ser154. Catalysis depends on Ser178, which acts as the Acyl-ester intermediate.

This sequence belongs to the amidase family. GatA subfamily. Heterotrimer of A, B and C subunits.

The enzyme catalyses L-glutamyl-tRNA(Gln) + L-glutamine + ATP + H2O = L-glutaminyl-tRNA(Gln) + L-glutamate + ADP + phosphate + H(+). In terms of biological role, allows the formation of correctly charged Gln-tRNA(Gln) through the transamidation of misacylated Glu-tRNA(Gln) in organisms which lack glutaminyl-tRNA synthetase. The reaction takes place in the presence of glutamine and ATP through an activated gamma-phospho-Glu-tRNA(Gln). The chain is Glutamyl-tRNA(Gln) amidotransferase subunit A from Cereibacter sphaeroides (strain ATCC 17029 / ATH 2.4.9) (Rhodobacter sphaeroides).